A 498-amino-acid polypeptide reads, in one-letter code: DNA-directed RNA polymerase subunit Rpo2N (498 aa).

It belongs to the RNA polymerase beta chain family. Part of the RNA polymerase complex.

The protein localises to the cytoplasm. It carries out the reaction RNA(n) + a ribonucleoside 5'-triphosphate = RNA(n+1) + diphosphate. In terms of biological role, DNA-dependent RNA polymerase (RNAP) catalyzes the transcription of DNA into RNA using the four ribonucleoside triphosphates as substrates. The Rpo2 subunit (Rpo2N and Rpo2C in this organism) is implicated in DNA promoter recognition and in nucleotide binding. The chain is DNA-directed RNA polymerase subunit Rpo2N from Methanocaldococcus jannaschii (strain ATCC 43067 / DSM 2661 / JAL-1 / JCM 10045 / NBRC 100440) (Methanococcus jannaschii).